The following is a 539-amino-acid chain: Chaperonin GroEL (539 aa).

ATP is bound by residues 30–33 (TLGP), K51, 87–91 (DGTTT), G415, 479–481 (NAA), and D495.

Belongs to the chaperonin (HSP60) family. In terms of assembly, forms a cylinder of 14 subunits composed of two heptameric rings stacked back-to-back. Interacts with the co-chaperonin GroES.

It localises to the cytoplasm. It catalyses the reaction ATP + H2O + a folded polypeptide = ADP + phosphate + an unfolded polypeptide.. Together with its co-chaperonin GroES, plays an essential role in assisting protein folding. The GroEL-GroES system forms a nano-cage that allows encapsulation of the non-native substrate proteins and provides a physical environment optimized to promote and accelerate protein folding. This chain is Chaperonin GroEL, found in Enterobacter asburiae.